Here is a 214-residue protein sequence, read N- to C-terminus: MEFIDLGLIPHGEAERIQLERLKQVMEGTAEDALYLLEHPPVVTLGRQGGLENLLISEEALKAMGAEVVQTARGGNITCHYPGQMVVYPVMRIEKRRGGIKKFFFDMEETAIRTAARFGVQAARSEGRPGVWVGPGKLCSIGIGVKKWITYHGLSFNVSSDMKLFDAITLCGLHGAHPTSLSREAGKEISTEEVKNVFREEFGKVFTDTAVAAS.

In terms of domain architecture, BPL/LPL catalytic spans 28–210; sequence GTAEDALYLL…EFGKVFTDTA (183 aa). Substrate contacts are provided by residues 73–80, 140–142, and 153–155; these read RGGNITCH, SIG, and GLS. Cys-171 acts as the Acyl-thioester intermediate in catalysis.

This sequence belongs to the LipB family.

It localises to the cytoplasm. The enzyme catalyses octanoyl-[ACP] + L-lysyl-[protein] = N(6)-octanoyl-L-lysyl-[protein] + holo-[ACP] + H(+). The protein operates within protein modification; protein lipoylation via endogenous pathway; protein N(6)-(lipoyl)lysine from octanoyl-[acyl-carrier-protein]: step 1/2. Its function is as follows. Catalyzes the transfer of endogenously produced octanoic acid from octanoyl-acyl-carrier-protein onto the lipoyl domains of lipoate-dependent enzymes. Lipoyl-ACP can also act as a substrate although octanoyl-ACP is likely to be the physiological substrate. This Maridesulfovibrio salexigens (strain ATCC 14822 / DSM 2638 / NCIMB 8403 / VKM B-1763) (Desulfovibrio salexigens) protein is Octanoyltransferase.